The primary structure comprises 400 residues: Acetate kinase (400 aa).

Residue Asn10 participates in Mg(2+) binding. Lys17 contacts ATP. Arg91 lines the substrate pocket. The active-site Proton donor/acceptor is the Asp150. Residues 210–214 (HLGNG), 285–287 (DCR), and 333–337 (GIGEN) contribute to the ATP site. Glu387 lines the Mg(2+) pocket.

It belongs to the acetokinase family. In terms of assembly, homodimer. Mg(2+) is required as a cofactor. The cofactor is Mn(2+).

It is found in the cytoplasm. The catalysed reaction is acetate + ATP = acetyl phosphate + ADP. Its pathway is metabolic intermediate biosynthesis; acetyl-CoA biosynthesis; acetyl-CoA from acetate: step 1/2. In terms of biological role, catalyzes the formation of acetyl phosphate from acetate and ATP. Can also catalyze the reverse reaction. The polypeptide is Acetate kinase (Yersinia pseudotuberculosis serotype IB (strain PB1/+)).